The sequence spans 720 residues: Neurochondrin (720 aa).

It belongs to the neurochondrin family.

Its subcellular location is the cytoplasm. The protein resides in the cytosol. It localises to the cell projection. The protein localises to the dendrite. It is found in the postsynapse. Functionally, probably involved in signal transduction, in the nervous system. Required for the spatial learning process. May also be involved in neurite outgrowth. The chain is Neurochondrin (ncdn) from Xenopus laevis (African clawed frog).